A 359-amino-acid polypeptide reads, in one-letter code: Lachesin (359 aa).

Positions 1–25 are cleaved as a signal peptide; it reads MWRPSISNCVWSTLLLAIFVQQTLA. Residues 29–130 form the Ig-like V-type domain; it reads PTISYITQEQ…HKVSAEVKLS (102 aa). An intrachain disulfide couples cysteine 50 to cysteine 113. Asparagine 92 and asparagine 140 each carry an N-linked (GlcNAc...) asparagine glycan. 2 Ig-like C2-type domains span residues 135–221 and 226–317; these read PVIS…INVE and PVIT…ARVN. 2 disulfides stabilise this stretch: cysteine 157–cysteine 204 and cysteine 247–cysteine 303. A lipid anchor (GPI-anchor amidated alanine) is attached at alanine 336. A propeptide spans 337–359 (removed in mature form); it reads GAEDVSATSFALVGILAALLFAR.

Expressed on differentiating neuronal cells from the onset of neurogenesis in both the central and peripheral nervous systems. First detected in the cellularized blastoderm, apart from in the ventral side. Expression persists uniformly in the early ectoderm until the end of gastrulation. From stage 10, expressed in an alternating strong/weak pattern in each segment until stage 15 when it disappears. From stage 11, expressed in subsets of neurons and later subsets of glial cells. From early stage 13, strongly expressed in trachea, hindgut, foregut and the nervous system.

It is found in the cell membrane. Required for normal tracheal development and maintenance of the trans-epithelial diffusion barrier. Functions as a homophilic cell-adhesion molecule. May play a role in early neuronal differentiation and axon outgrowth. This chain is Lachesin (Lac), found in Drosophila melanogaster (Fruit fly).